The primary structure comprises 98 residues: Late cornified envelope-like proline-rich protein 1 (98 aa).

Positions methionine 1–lysine 26 are disordered.

Belongs to the cornifin (SPRR) family.

The protein is Late cornified envelope-like proline-rich protein 1 (LELP1) of Homo sapiens (Human).